The following is a 357-amino-acid chain: Holliday junction branch migration complex subunit RuvB (357 aa).

The tract at residues 1–27 is disordered; that stretch reads MGRFDDAGAQDAEPDDRDVSPALTVGE. The large ATPase domain (RuvB-L) stretch occupies residues 1 to 195; that stretch reads MGRFDDAGAQ…FGFTAHMDFY (195 aa). Residues leucine 34, arginine 35, glycine 76, lysine 79, threonine 80, serine 81, 142-144, arginine 185, tyrosine 195, and arginine 232 each bind ATP; that span reads EDF. Threonine 80 serves as a coordination point for Mg(2+). The segment at 196-266 is small ATPAse domain (RuvB-S); sequence EPAELERVLA…IAKAALEVYD (71 aa). Positions 269–357 are head domain (RuvB-H); it reads ELGLDRLDRA…TGLGQTGLFD (89 aa). Positions 324 and 329 each coordinate DNA.

Belongs to the RuvB family. In terms of assembly, homohexamer. Forms an RuvA(8)-RuvB(12)-Holliday junction (HJ) complex. HJ DNA is sandwiched between 2 RuvA tetramers; dsDNA enters through RuvA and exits via RuvB. An RuvB hexamer assembles on each DNA strand where it exits the tetramer. Each RuvB hexamer is contacted by two RuvA subunits (via domain III) on 2 adjacent RuvB subunits; this complex drives branch migration. In the full resolvosome a probable DNA-RuvA(4)-RuvB(12)-RuvC(2) complex forms which resolves the HJ.

Its subcellular location is the cytoplasm. It carries out the reaction ATP + H2O = ADP + phosphate + H(+). Its function is as follows. The RuvA-RuvB-RuvC complex processes Holliday junction (HJ) DNA during genetic recombination and DNA repair, while the RuvA-RuvB complex plays an important role in the rescue of blocked DNA replication forks via replication fork reversal (RFR). RuvA specifically binds to HJ cruciform DNA, conferring on it an open structure. The RuvB hexamer acts as an ATP-dependent pump, pulling dsDNA into and through the RuvAB complex. RuvB forms 2 homohexamers on either side of HJ DNA bound by 1 or 2 RuvA tetramers; 4 subunits per hexamer contact DNA at a time. Coordinated motions by a converter formed by DNA-disengaged RuvB subunits stimulates ATP hydrolysis and nucleotide exchange. Immobilization of the converter enables RuvB to convert the ATP-contained energy into a lever motion, pulling 2 nucleotides of DNA out of the RuvA tetramer per ATP hydrolyzed, thus driving DNA branch migration. The RuvB motors rotate together with the DNA substrate, which together with the progressing nucleotide cycle form the mechanistic basis for DNA recombination by continuous HJ branch migration. Branch migration allows RuvC to scan DNA until it finds its consensus sequence, where it cleaves and resolves cruciform DNA. The protein is Holliday junction branch migration complex subunit RuvB of Mycobacterium sp. (strain JLS).